The primary structure comprises 41 residues: Submaxillary gland androgen-regulated protein 2, isoform beta (41 aa).

Residues 1–22 form the signal peptide; sequence MKALYMVFVLWVLIGCFLRLLK.

Its subcellular location is the secreted. Functionally, may play a role in protection or detoxification. The sequence is that of Submaxillary gland androgen-regulated protein 2, isoform beta (Smr2) from Mus musculus (Mouse).